A 357-amino-acid chain; its full sequence is tRNA-specific 2-thiouridylase MnmA (357 aa).

Residues 6–13 and Leu32 each bind ATP; that span reads AMSGGVDS. Cys101 functions as the Nucleophile in the catalytic mechanism. A disulfide bridge links Cys101 with Cys193. Position 125 (Gly125) interacts with ATP. The tract at residues 143–145 is interaction with tRNA; the sequence is KDQ. The Cysteine persulfide intermediate role is filled by Cys193.

This sequence belongs to the MnmA/TRMU family.

It localises to the cytoplasm. It carries out the reaction S-sulfanyl-L-cysteinyl-[protein] + uridine(34) in tRNA + AH2 + ATP = 2-thiouridine(34) in tRNA + L-cysteinyl-[protein] + A + AMP + diphosphate + H(+). Functionally, catalyzes the 2-thiolation of uridine at the wobble position (U34) of tRNA, leading to the formation of s(2)U34. This Mycolicibacterium gilvum (strain PYR-GCK) (Mycobacterium gilvum (strain PYR-GCK)) protein is tRNA-specific 2-thiouridylase MnmA.